Consider the following 283-residue polypeptide: Pantothenate synthetase 2 (283 aa).

Methionine 34–histidine 41 contributes to the ATP binding site. Histidine 41 (proton donor) is an active-site residue. Glutamine 65 contacts (R)-pantoate. Glutamine 65 serves as a coordination point for beta-alanine. Glycine 152–aspartate 155 is an ATP binding site. Position 158 (glutamine 158) interacts with (R)-pantoate. ATP contacts are provided by residues valine 181 and methionine 189 to arginine 192.

Belongs to the pantothenate synthetase family. In terms of assembly, homodimer.

Its subcellular location is the cytoplasm. The enzyme catalyses (R)-pantoate + beta-alanine + ATP = (R)-pantothenate + AMP + diphosphate + H(+). It functions in the pathway cofactor biosynthesis; (R)-pantothenate biosynthesis; (R)-pantothenate from (R)-pantoate and beta-alanine: step 1/1. Catalyzes the condensation of pantoate with beta-alanine in an ATP-dependent reaction via a pantoyl-adenylate intermediate. The sequence is that of Pantothenate synthetase 2 from Bradyrhizobium diazoefficiens (strain JCM 10833 / BCRC 13528 / IAM 13628 / NBRC 14792 / USDA 110).